We begin with the raw amino-acid sequence, 325 residues long: NADH-quinone oxidoreductase subunit H (325 aa).

A run of 8 helical transmembrane segments spans residues 11–31 (ILIS…CGAF), 81–101 (AIFT…FAIV), 114–134 (IGIL…LFAG), 154–174 (LSYE…AGSF), 186–206 (VWNV…GVAV), 237–257 (FFVG…TLFF), 265–285 (LPPF…FILI), and 304–324 (VCLP…LYNA).

This sequence belongs to the complex I subunit 1 family. In terms of assembly, NDH-1 is composed of 13 different subunits. Subunits NuoA, H, J, K, L, M, N constitute the membrane sector of the complex.

The protein resides in the cell inner membrane. It carries out the reaction a quinone + NADH + 5 H(+)(in) = a quinol + NAD(+) + 4 H(+)(out). Functionally, NDH-1 shuttles electrons from NADH, via FMN and iron-sulfur (Fe-S) centers, to quinones in the respiratory chain. The immediate electron acceptor for the enzyme in this species is believed to be ubiquinone. Couples the redox reaction to proton translocation (for every two electrons transferred, four hydrogen ions are translocated across the cytoplasmic membrane), and thus conserves the redox energy in a proton gradient. This subunit may bind ubiquinone. The polypeptide is NADH-quinone oxidoreductase subunit H (Yersinia enterocolitica serotype O:8 / biotype 1B (strain NCTC 13174 / 8081)).